A 289-amino-acid polypeptide reads, in one-letter code: MRILEKAPAKINLSLDVHGKRPDGYHEVEMVMTTIDLADRLELTELDKDEIRVSSHNRFVPDDQRNLAYQAAKLLKTRFGIQKGVSIVITKTIPVAAGLAGGSSDAAAALRGLNRLWKLNLTLDELAELGAEIGSDVSFCVHGGTALATGRGEKLKHIATPPHCWVILAKPVIGVSTAEVYRQYDASKVEHPNVERMIEAIEAKDYKEMCGSLGNVLESVTLKMYPEVDMIKRQMKRFGADAVLMSGSGPTVFGLIQYESKVQRIYNGLRGFCDQVYAVRMIGEQNALD.

K10 is an active-site residue. 94-104 provides a ligand contact to ATP; the sequence is PVAAGLAGGSS. Residue D136 is part of the active site.

Belongs to the GHMP kinase family. IspE subfamily.

It carries out the reaction 4-CDP-2-C-methyl-D-erythritol + ATP = 4-CDP-2-C-methyl-D-erythritol 2-phosphate + ADP + H(+). It functions in the pathway isoprenoid biosynthesis; isopentenyl diphosphate biosynthesis via DXP pathway; isopentenyl diphosphate from 1-deoxy-D-xylulose 5-phosphate: step 3/6. Catalyzes the phosphorylation of the position 2 hydroxy group of 4-diphosphocytidyl-2C-methyl-D-erythritol. The polypeptide is 4-diphosphocytidyl-2-C-methyl-D-erythritol kinase (Bacillus pumilus (strain SAFR-032)).